The sequence spans 565 residues: Bicyclogermacrene synthase (565 aa).

Asp317, Asp321, Asp461, and Glu469 together coordinate Mg(2+). Positions Asp317 to Asp321 match the DDXXD motif motif.

Belongs to the terpene synthase family. The cofactor is Mg(2+).

The enzyme catalyses (2E,6E)-farnesyl diphosphate = bicyclogermacrene + diphosphate. Its pathway is secondary metabolite biosynthesis; terpenoid biosynthesis. Its function is as follows. Sesquiterpene synthase converting farnesyl diphosphate to bicyclogermacrene as the major product. The sequence is that of Bicyclogermacrene synthase from Phyla dulcis (Aztec sweet herb).